The following is a 454-amino-acid chain: DNA primase small subunit (454 aa).

Active-site residues include E66, D131, and D133. Mg(2+) contacts are provided by D131 and D133. The Mn(2+) site is built by D131 and D133. Residue 131-133 coordinates a ribonucleoside 5'-triphosphate; the sequence is DID. 4 residues coordinate Zn(2+): C143, C144, C150, and C153. Residues 143–153 carry the Zinc knuckle motif motif; it reads CCSKTNICEKC. Residue 182–188 participates in a ribonucleoside 5'-triphosphate binding; it reads SGRRGIH. Mg(2+) is bound at residue D333. D333 lines the Mn(2+) pocket. 342 to 345 is an a ribonucleoside 5'-triphosphate binding site; that stretch reads HLLK. Residues 385-420 are disordered; that stretch reads DKNSQNDNGHGPTMETNTTENQKDNARGQSNKGHGF. Polar residues-rich tracts occupy residues 389–404 and 411–420; these read QNDN…NTTE and RGQSNKGHGF.

It belongs to the eukaryotic-type primase small subunit family. As to quaternary structure, heterodimer of a catalytic subunit spp1/pri1 and a regulatory subunit spp2/pri2, also known as the DNA primase complex. Component of the alpha DNA polymerase complex (also known as the alpha DNA polymerase-primase complex) consisting of four subunits: the catalytic subunit pol1, the accessory subunit spb70/pol12, and the primase complex subunits spp1/pri1 and spp2/pri2 respectively. Mg(2+) serves as cofactor. Requires Mn(2+) as cofactor.

It is found in the nucleus. The catalysed reaction is ssDNA + n NTP = ssDNA/pppN(pN)n-1 hybrid + (n-1) diphosphate.. Functionally, catalytic subunit of the DNA primase complex and component of the DNA polymerase alpha complex (also known as the alpha DNA polymerase-primase complex - primosome/replisome) which play an essential role in the initiation of DNA synthesis. During the S phase of the cell cycle, the DNA polymerase alpha complex (composed of a catalytic subunit pol1, an accessory subunit spb70/pol12 and two primase subunits, the catalytic subunit spp1/pri1 and the regulatory subunit spp2/pri2) is recruited to DNA at the replicative forks. The primase subunit of the polymerase alpha complex initiates DNA synthesis by oligomerising short RNA primers on both leading and lagging strands. In Schizosaccharomyces pombe (strain 972 / ATCC 24843) (Fission yeast), this protein is DNA primase small subunit.